The primary structure comprises 227 residues: Cytochrome c oxidase subunit 2 (227 aa).

The Mitochondrial intermembrane segment spans residues 1–14; the sequence is MPYPLQLGLQDATS. The helical transmembrane segment at 15–45 threads the bilayer; that stretch reads PIMEELTHFHDHTLMIVFLISSLVLYIISSM. At 46–59 the chain is on the mitochondrial matrix side; it reads LTTKLTHTSTMDAQ. Residues 60–87 traverse the membrane as a helical segment; that stretch reads EVETIWTILPAMILILIALPSLRILYMM. The Mitochondrial intermembrane segment spans residues 88 to 227; sequence DEINDPSLTV…YFEDWSASLL (140 aa). The Cu cation site is built by His161, Cys196, Glu198, Cys200, His204, and Met207. Glu198 provides a ligand contact to Mg(2+).

The protein belongs to the cytochrome c oxidase subunit 2 family. Component of the cytochrome c oxidase (complex IV, CIV), a multisubunit enzyme composed of 14 subunits. The complex is composed of a catalytic core of 3 subunits MT-CO1, MT-CO2 and MT-CO3, encoded in the mitochondrial DNA, and 11 supernumerary subunits COX4I, COX5A, COX5B, COX6A, COX6B, COX6C, COX7A, COX7B, COX7C, COX8 and NDUFA4, which are encoded in the nuclear genome. The complex exists as a monomer or a dimer and forms supercomplexes (SCs) in the inner mitochondrial membrane with NADH-ubiquinone oxidoreductase (complex I, CI) and ubiquinol-cytochrome c oxidoreductase (cytochrome b-c1 complex, complex III, CIII), resulting in different assemblies (supercomplex SCI(1)III(2)IV(1) and megacomplex MCI(2)III(2)IV(2)). Found in a complex with TMEM177, COA6, COX18, COX20, SCO1 and SCO2. Interacts with TMEM177 in a COX20-dependent manner. Interacts with COX20. Interacts with COX16. Cu cation is required as a cofactor.

The protein localises to the mitochondrion inner membrane. The catalysed reaction is 4 Fe(II)-[cytochrome c] + O2 + 8 H(+)(in) = 4 Fe(III)-[cytochrome c] + 2 H2O + 4 H(+)(out). In terms of biological role, component of the cytochrome c oxidase, the last enzyme in the mitochondrial electron transport chain which drives oxidative phosphorylation. The respiratory chain contains 3 multisubunit complexes succinate dehydrogenase (complex II, CII), ubiquinol-cytochrome c oxidoreductase (cytochrome b-c1 complex, complex III, CIII) and cytochrome c oxidase (complex IV, CIV), that cooperate to transfer electrons derived from NADH and succinate to molecular oxygen, creating an electrochemical gradient over the inner membrane that drives transmembrane transport and the ATP synthase. Cytochrome c oxidase is the component of the respiratory chain that catalyzes the reduction of oxygen to water. Electrons originating from reduced cytochrome c in the intermembrane space (IMS) are transferred via the dinuclear copper A center (CU(A)) of subunit 2 and heme A of subunit 1 to the active site in subunit 1, a binuclear center (BNC) formed by heme A3 and copper B (CU(B)). The BNC reduces molecular oxygen to 2 water molecules using 4 electrons from cytochrome c in the IMS and 4 protons from the mitochondrial matrix. The sequence is that of Cytochrome c oxidase subunit 2 (MT-CO2) from Dugong dugon (Dugong).